A 191-amino-acid polypeptide reads, in one-letter code: Photosystem I assembly protein Ycf4 (191 aa).

A run of 2 helical transmembrane segments spans residues 34 to 54 (VASM…SSYF) and 68 to 88 (IFVP…LLAI).

This sequence belongs to the Ycf4 family.

The protein resides in the cellular thylakoid membrane. Its function is as follows. Seems to be required for the assembly of the photosystem I complex. This is Photosystem I assembly protein Ycf4 from Prochlorococcus marinus (strain NATL2A).